The following is a 424-amino-acid chain: Histidine--tRNA ligase (424 aa).

This sequence belongs to the class-II aminoacyl-tRNA synthetase family. As to quaternary structure, homodimer.

It is found in the cytoplasm. It carries out the reaction tRNA(His) + L-histidine + ATP = L-histidyl-tRNA(His) + AMP + diphosphate + H(+). This is Histidine--tRNA ligase from Klebsiella pneumoniae (strain 342).